The primary structure comprises 276 residues: Mitochondrial distribution and morphology protein 12 (276 aa).

The region spanning 1–276 (MSIDIQWNLL…FVWPSYFTLY (276 aa)) is the SMP-LTD domain. The segment at 68–104 (TLYSDDSSSLDDEESDREEENMTELPPYGATENGVHK) is disordered. Acidic residues predominate over residues 75-89 (SSLDDEESDREEENM).

It belongs to the MDM12 family. Component of the ER-mitochondria encounter structure (ERMES) or MDM complex, composed of mmm1, mdm10, mdm12 and mdm34. A mmm1 homodimer associates with one molecule of mdm12 on each side in a pairwise head-to-tail manner, and the SMP-LTD domains of mmm1 and mdm12 generate a continuous hydrophobic tunnel for phospholipid trafficking.

Its subcellular location is the mitochondrion outer membrane. The protein localises to the endoplasmic reticulum membrane. In terms of biological role, component of the ERMES/MDM complex, which serves as a molecular tether to connect the endoplasmic reticulum (ER) and mitochondria. Components of this complex are involved in the control of mitochondrial shape and protein biogenesis, and function in nonvesicular lipid trafficking between the ER and mitochondria. Mdm12 is required for the interaction of the ER-resident membrane protein mmm1 and the outer mitochondrial membrane-resident beta-barrel protein mdm10. The mdm12-mmm1 subcomplex functions in the major beta-barrel assembly pathway that is responsible for biogenesis of all mitochondrial outer membrane beta-barrel proteins, and acts in a late step after the SAM complex. The mdm10-mdm12-mmm1 subcomplex further acts in the TOM40-specific pathway after the action of the mdm12-mmm1 complex. Essential for establishing and maintaining the structure of mitochondria and maintenance of mtDNA nucleoids. This is Mitochondrial distribution and morphology protein 12 from Schizosaccharomyces japonicus (strain yFS275 / FY16936) (Fission yeast).